Consider the following 253-residue polypeptide: Large ribosomal subunit protein uL2C (253 aa).

It belongs to the universal ribosomal protein uL2 family. Component of the large ribosomal subunit (LSU). Mature yeast ribosomes consist of a small (40S) and a large (60S) subunit. The 40S small subunit contains 1 molecule of ribosomal RNA (18S rRNA) and at least 33 different proteins. The large 60S subunit contains 3 rRNA molecules (25S, 5.8S and 5S rRNA) and at least 46 different proteins.

Its subcellular location is the cytoplasm. The protein resides in the nucleus. Component of the ribosome, a large ribonucleoprotein complex responsible for the synthesis of proteins in the cell. The small ribosomal subunit (SSU) binds messenger RNAs (mRNAs) and translates the encoded message by selecting cognate aminoacyl-transfer RNA (tRNA) molecules. The large subunit (LSU) contains the ribosomal catalytic site termed the peptidyl transferase center (PTC), which catalyzes the formation of peptide bonds, thereby polymerizing the amino acids delivered by tRNAs into a polypeptide chain. The nascent polypeptides leave the ribosome through a tunnel in the LSU and interact with protein factors that function in enzymatic processing, targeting, and the membrane insertion of nascent chains at the exit of the ribosomal tunnel. The protein is Large ribosomal subunit protein uL2C (rpl803) of Schizosaccharomyces pombe (strain 972 / ATCC 24843) (Fission yeast).